Consider the following 134-residue polypeptide: uncharacterized protein (134 aa).

This is an uncharacterized protein from Bacillus subtilis (strain 168).